The primary structure comprises 71 residues: Protein translocase subunit SecE (71 aa).

Residues 43–63 (VAGAGILAVGAIGFIIYVLLT) traverse the membrane as a helical segment.

The protein belongs to the SecE/SEC61-gamma family. In terms of assembly, component of the Sec protein translocase complex. Heterotrimer consisting of SecY (alpha), SecG (beta) and SecE (gamma) subunits. The heterotrimers can form oligomers, although 1 heterotrimer is thought to be able to translocate proteins. Interacts with the ribosome. May interact with SecDF, and other proteins may be involved.

The protein localises to the cell membrane. Essential subunit of the Sec protein translocation channel SecYEG. Clamps together the 2 halves of SecY. May contact the channel plug during translocation. This Methanosarcina acetivorans (strain ATCC 35395 / DSM 2834 / JCM 12185 / C2A) protein is Protein translocase subunit SecE.